We begin with the raw amino-acid sequence, 214 residues long: Small ribosomal subunit protein uS2 (214 aa).

Belongs to the universal ribosomal protein uS2 family.

The polypeptide is Small ribosomal subunit protein uS2 (Thermofilum pendens (strain DSM 2475 / Hrk 5)).